Consider the following 275-residue polypeptide: Tumor necrosis factor-inducible gene 6 protein (275 aa).

Residues methionine 1–glycine 17 form the signal peptide. The Link domain maps to glycine 36–asparagine 129. 3 cysteine pairs are disulfide-bonded: cysteine 58-cysteine 127, cysteine 82-cysteine 103, and cysteine 135-cysteine 161. The N-linked (GlcNAc...) asparagine glycan is linked to asparagine 118. Residues cysteine 135 to valine 247 form the CUB domain. The Ca(2+) site is built by glutamate 183, aspartate 191, aspartate 232, serine 234, and valine 235. Cysteine 188 and cysteine 210 are oxidised to a cystine. Residues serine 253–asparagine 264 show a composition bias toward polar residues. Positions serine 253–leucine 275 are disordered. Asparagine 258 is a glycosylation site (N-linked (GlcNAc...) asparagine).

As to quaternary structure, interacts (via Link domain) with inter-alpha-inhibitor (I-alpha-I) component bikunin. Interacts with ITIH2/HC2; this interaction is required for transesterification of the HC to hyaluronan. Interacts (via Link and CUB domains) with ITIH1. Chondroitin sulfate may be required for the stability of the complex. Interacts (via Link domain) with various C-X-C and C-C chemokines including PF4, CXCL8, CXCL11, CXCL12, CCL2, CCL7, CCL19, CCL21, and CCL27; this interaction interferes with chemokine binding to glycosaminoglycans. Interacts (primarily via Link domain) with BMP2; this interaction is inhibited by hyaluronan. Interacts (via both Link and CUB domains) with TNFSF11. Interacts (via CUB domain) with FN1 (via type III repeats 9-14); this interaction enhances fibronectin fibril assembly. TNFAIP6 may act as a bridging molecule between FN1 and THBS1. In terms of tissue distribution, expressed in epiphyseal and metaphyseal bone marrow of both the femur and tibia (at protein level).

It is found in the secreted. Functionally, major regulator of extracellular matrix organization during tissue remodeling. Catalyzes the transfer of a heavy chain (HC) from inter-alpha-inhibitor (I-alpha-I) complex to hyaluronan. Cleaves the ester bond between the C-terminus of the HC and GalNAc residue of the chondroitin sulfate chain in I-alpha-I complex followed by transesterification of the HC to hyaluronan. In the process, potentiates the antiprotease function of I-alpha-I complex through release of free bikunin. Acts as a catalyst in the formation of hyaluronan-HC oligomers and hyaluronan-rich matrix surrounding the cumulus cell-oocyte complex, a necessary step for oocyte fertilization. Assembles hyaluronan in pericellular matrices that serve as platforms for receptor clustering and signaling. Enables binding of hyaluronan deposited on the surface of macrophages to LYVE1 on lymphatic endothelium and facilitates macrophage extravasation. Alters hyaluronan binding to functionally latent CD44 on vascular endothelium, switching CD44 into an active state that supports leukocyte rolling. Modulates the interaction of chemokines with extracellular matrix components and proteoglycans on endothelial cell surface, likely preventing chemokine gradient formation. In a negative feedback mechanism, may limit excessive neutrophil recruitment at inflammatory sites by antagonizing the association of CXCL8 with glycosaminoglycans on vascular endothelium. Has a role in osteogenesis and bone remodeling. Inhibits BMP2-dependent differentiation of mesenchymal stem cell to osteoblasts. Protects against bone erosion during inflammation by inhibiting TNFSF11/RANKL-dependent osteoclast activation. This Mus musculus (Mouse) protein is Tumor necrosis factor-inducible gene 6 protein (Tnfaip6).